Reading from the N-terminus, the 413-residue chain is Peptidase T (413 aa).

His-81 provides a ligand contact to Zn(2+). Asp-83 is a catalytic residue. Asp-143 contacts Zn(2+). The active-site Proton acceptor is Glu-178. Residues Glu-179, Asp-201, and His-383 each coordinate Zn(2+).

It belongs to the peptidase M20B family. As to quaternary structure, homodimer. Zn(2+) is required as a cofactor.

It localises to the cytoplasm. The catalysed reaction is Release of the N-terminal residue from a tripeptide.. Its activity is regulated as follows. Inhibited by EDTA, by the reducing agents dithiothreitol and 13-mercaptoethanol, and by the divalent cation Cu(2+). Its function is as follows. Cleaves the N-terminal amino acid of tripeptides. Has a broad specificity for tripeptides with no clear preference for a particular tripeptide. Tripeptides with proline in the second position are an exception and are not hydrolyzed. Does not hydrolyze dipeptides, tetrapeptides, or oligopeptides. This is Peptidase T (pepT) from Lactococcus lactis subsp. cremoris (Streptococcus cremoris).